The primary structure comprises 65 residues: Large ribosomal subunit protein uL29 (65 aa).

The protein belongs to the universal ribosomal protein uL29 family.

This chain is Large ribosomal subunit protein uL29, found in Dehalococcoides mccartyi (strain ATCC BAA-2100 / JCM 16839 / KCTC 5957 / BAV1).